We begin with the raw amino-acid sequence, 230 residues long: NAD(P)H-quinone oxidoreductase subunit K, chloroplastic (230 aa).

Cys43, Cys44, Cys108, and Cys139 together coordinate [4Fe-4S] cluster.

The protein belongs to the complex I 20 kDa subunit family. NDH is composed of at least 16 different subunits, 5 of which are encoded in the nucleus. [4Fe-4S] cluster is required as a cofactor.

It is found in the plastid. It localises to the chloroplast thylakoid membrane. It carries out the reaction a plastoquinone + NADH + (n+1) H(+)(in) = a plastoquinol + NAD(+) + n H(+)(out). The catalysed reaction is a plastoquinone + NADPH + (n+1) H(+)(in) = a plastoquinol + NADP(+) + n H(+)(out). NDH shuttles electrons from NAD(P)H:plastoquinone, via FMN and iron-sulfur (Fe-S) centers, to quinones in the photosynthetic chain and possibly in a chloroplast respiratory chain. The immediate electron acceptor for the enzyme in this species is believed to be plastoquinone. Couples the redox reaction to proton translocation, and thus conserves the redox energy in a proton gradient. In Lotus japonicus (Lotus corniculatus var. japonicus), this protein is NAD(P)H-quinone oxidoreductase subunit K, chloroplastic.